The chain runs to 246 residues: Chlorophyll a-b binding protein 6A, chloroplastic (246 aa).

A chloroplast-targeting transit peptide spans 1 to 45; it reads MASNTLMSCGIPAVCPSFLSSTKSKFAAAMPVYVGATNFMSRFSM. Tryptophan 49 serves as a coordination point for chlorophyll b. Residues phenylalanine 69, glutamate 88, and histidine 91 each coordinate chlorophyll a. Arginine 93 provides a ligand contact to chlorophyll b. A helical membrane pass occupies residues 94-114; that stretch reads WAMLAVPGIIVPEALGLGNWV. Leucine 130 lines the chlorophyll a pocket. The helical transmembrane segment at 133 to 153 threads the bilayer; it reads PVPWGTLPTILAIEFLAIAFV. Positions 134, 154, and 157 each coordinate chlorophyll b. Chlorophyll a-binding residues include lysine 191, glutamate 192, asparagine 195, arginine 197, glutamine 209, and histidine 225.

It belongs to the light-harvesting chlorophyll a/b-binding (LHC) protein family. As to quaternary structure, the LHC complex consists of chlorophyll a-b binding proteins. It depends on Binds at least 14 chlorophylls (8 Chl-a and 6 Chl-b) and carotenoids such as lutein and neoxanthin. as a cofactor. In terms of processing, photoregulated by reversible phosphorylation of its threonine residues.

It localises to the plastid. The protein resides in the chloroplast thylakoid membrane. Functionally, the light-harvesting complex (LHC) functions as a light receptor, it captures and delivers excitation energy to photosystems with which it is closely associated. The sequence is that of Chlorophyll a-b binding protein 6A, chloroplastic (CAB6A) from Solanum lycopersicum (Tomato).